The chain runs to 78 residues: MSEVLPYGDEKLSPYGDGGDVGQIFSCRLQDTNNFFGAGQSKRPPKLGQIGRSKRVVIEDDRIDDVLKTMTDKAPPGV.

The CAMK2 inhibitory domain stretch occupies residues 41 to 68 (SKRPPKLGQIGRSKRVVIEDDRIDDVLK).

It belongs to the CAMK2N family. As to quaternary structure, interacts with CAMK2B; the presence of Ca(2+)/calmodulin increases the interaction but is not essential. Interacts with CAMK2A; this interaction requires CAMK2A activation by Ca(2+). In terms of tissue distribution, expressed in the brain (at protein level). Expressed in cardiomyocytes but not cardiac fibroblasts (at protein level).

Its subcellular location is the synapse. It is found in the cell projection. It localises to the dendrite. The protein localises to the postsynaptic density. Its function is as follows. Potent and specific inhibitor of CaM-kinase II (CAMK2). Plays a role in the maintenance of long-term retrieval-induced memory in response to contextual fear. Modulates blood pressure and vascular reactivity via regulation of CAMK2 activity in addition to regulation of left ventricular mass. Mediates the NLRP3 inflammasome in cardiomyocytes via acting as an inhibitor of the MAPK14/p38 and MAPK8/JNK pathways, thereby regulating ventricular remodeling and cardiac rhythm post-myocardial infarction. Negatively effects insulin sensitivity and promotes lipid formation in adipose tissues independent of CAMK2 signaling. The chain is Calcium/calmodulin-dependent protein kinase II inhibitor 1 (Camk2n1) from Mus musculus (Mouse).